The chain runs to 289 residues: Pyridoxal kinase PdxY (289 aa).

Substrate contacts are provided by residues Ser-9 and 44–45 (TQ). Residues Asp-112, Ala-144, Glu-149, Lys-183, and 210–213 (RPLV) contribute to the ATP site. Position 225 (Asp-225) interacts with substrate.

This sequence belongs to the pyridoxine kinase family. PdxY subfamily. Homodimer. Mg(2+) is required as a cofactor.

The enzyme catalyses pyridoxal + ATP = pyridoxal 5'-phosphate + ADP + H(+). Its pathway is cofactor metabolism; pyridoxal 5'-phosphate salvage; pyridoxal 5'-phosphate from pyridoxal: step 1/1. Functionally, pyridoxal kinase involved in the salvage pathway of pyridoxal 5'-phosphate (PLP). Catalyzes the phosphorylation of pyridoxal to PLP. This Proteus mirabilis protein is Pyridoxal kinase PdxY.